A 417-amino-acid chain; its full sequence is Serine hydroxymethyltransferase (417 aa).

Residues L121 and 125–127 (GHL) contribute to the (6S)-5,6,7,8-tetrahydrofolate site. The residue at position 229 (K229) is an N6-(pyridoxal phosphate)lysine. 355–357 (SPF) provides a ligand contact to (6S)-5,6,7,8-tetrahydrofolate.

It belongs to the SHMT family. In terms of assembly, homodimer. Pyridoxal 5'-phosphate serves as cofactor.

It is found in the cytoplasm. The catalysed reaction is (6R)-5,10-methylene-5,6,7,8-tetrahydrofolate + glycine + H2O = (6S)-5,6,7,8-tetrahydrofolate + L-serine. The protein operates within one-carbon metabolism; tetrahydrofolate interconversion. Its pathway is amino-acid biosynthesis; glycine biosynthesis; glycine from L-serine: step 1/1. Catalyzes the reversible interconversion of serine and glycine with tetrahydrofolate (THF) serving as the one-carbon carrier. This reaction serves as the major source of one-carbon groups required for the biosynthesis of purines, thymidylate, methionine, and other important biomolecules. Also exhibits THF-independent aldolase activity toward beta-hydroxyamino acids, producing glycine and aldehydes, via a retro-aldol mechanism. This Shewanella baltica (strain OS223) protein is Serine hydroxymethyltransferase.